The following is a 338-amino-acid chain: Beta-ketoacyl-[acyl-carrier-protein] synthase III 2 (338 aa).

Catalysis depends on residues Cys119 and His255. Positions 256–260 (QANIR) are ACP-binding. The active site involves Asn285.

It belongs to the thiolase-like superfamily. FabH family. As to quaternary structure, homodimer.

The protein resides in the cytoplasm. The catalysed reaction is malonyl-[ACP] + acetyl-CoA + H(+) = 3-oxobutanoyl-[ACP] + CO2 + CoA. It functions in the pathway lipid metabolism; fatty acid biosynthesis. Functionally, catalyzes the condensation reaction of fatty acid synthesis by the addition to an acyl acceptor of two carbons from malonyl-ACP. Catalyzes the first condensation reaction which initiates fatty acid synthesis and may therefore play a role in governing the total rate of fatty acid production. Possesses both acetoacetyl-ACP synthase and acetyl transacylase activities. Its substrate specificity determines the biosynthesis of branched-chain and/or straight-chain of fatty acids. The polypeptide is Beta-ketoacyl-[acyl-carrier-protein] synthase III 2 (Deinococcus radiodurans (strain ATCC 13939 / DSM 20539 / JCM 16871 / CCUG 27074 / LMG 4051 / NBRC 15346 / NCIMB 9279 / VKM B-1422 / R1)).